A 176-amino-acid polypeptide reads, in one-letter code: Large ribosomal subunit protein uL6 (176 aa).

This sequence belongs to the universal ribosomal protein uL6 family. Part of the 50S ribosomal subunit.

Its function is as follows. This protein binds to the 23S rRNA, and is important in its secondary structure. It is located near the subunit interface in the base of the L7/L12 stalk, and near the tRNA binding site of the peptidyltransferase center. In Thiobacillus denitrificans (strain ATCC 25259 / T1), this protein is Large ribosomal subunit protein uL6.